The chain runs to 36 residues: MTTFDFPSVLVPLVGLVFPAMAMASLSLHVQKNKTV.

A helical membrane pass occupies residues 6-28 (FPSVLVPLVGLVFPAMAMASLSL).

The protein belongs to the PsaI family.

It localises to the plastid. Its subcellular location is the chloroplast thylakoid membrane. Its function is as follows. May help in the organization of the PsaL subunit. In Panax ginseng (Korean ginseng), this protein is Photosystem I reaction center subunit VIII.